The following is a 275-amino-acid chain: Large ribosomal subunit protein uL2c (275 aa).

The tract at residues 219 to 254 (TVRGSVMNPCDHPHGGGEGRAPIGRTRPLTPWGKPA) is disordered.

Belongs to the universal ribosomal protein uL2 family. Part of the 50S ribosomal subunit.

Its subcellular location is the plastid. It localises to the chloroplast. The polypeptide is Large ribosomal subunit protein uL2c (rpl2) (Phaeodactylum tricornutum (strain CCAP 1055/1)).